Reading from the N-terminus, the 164-residue chain is Endoribonuclease YbeY (164 aa).

Residues His-125, His-129, and His-135 each coordinate Zn(2+).

It belongs to the endoribonuclease YbeY family. Zn(2+) is required as a cofactor.

The protein resides in the cytoplasm. Its function is as follows. Single strand-specific metallo-endoribonuclease involved in late-stage 70S ribosome quality control and in maturation of the 3' terminus of the 16S rRNA. The chain is Endoribonuclease YbeY from Paramagnetospirillum magneticum (strain ATCC 700264 / AMB-1) (Magnetospirillum magneticum).